The sequence spans 304 residues: 2-oxoacid:ferredoxin oxidoreductase 2, subunit beta (304 aa).

[4Fe-4S] cluster-binding residues include C12, C15, and C46. Residues 44–47 (IGCS) and H65 each bind thiamine diphosphate. D90 provides a ligand contact to Mg(2+). Position 91 to 92 (91 to 92 (GD)) interacts with thiamine diphosphate. Mg(2+) is bound by residues N118 and V120. 122–123 (GL) is a thiamine diphosphate binding site. [4Fe-4S] cluster is bound at residue C197.

As to quaternary structure, heterodimer composed of an alpha and a beta subunit. It depends on [4Fe-4S] cluster as a cofactor. Requires thiamine diphosphate as cofactor. Mg(2+) is required as a cofactor.

The catalysed reaction is a 2-oxocarboxylate + 2 oxidized [2Fe-2S]-[ferredoxin] + CoA = an acyl-CoA + 2 reduced [2Fe-2S]-[ferredoxin] + CO2 + H(+). In terms of biological role, catalyzes the coenzyme A-dependent oxidative decarboxylation of different 2-oxoacids such as 2-oxoglutarate, pyruvate and 2-oxobutyrate to form their CoA derivatives. This is 2-oxoacid:ferredoxin oxidoreductase 2, subunit beta from Sulfurisphaera tokodaii (strain DSM 16993 / JCM 10545 / NBRC 100140 / 7) (Sulfolobus tokodaii).